The primary structure comprises 635 residues: Threonine--tRNA ligase (635 aa).

Residues 1–58 (MIHVTCNQEAFELPEGASAMDLANKMKQSHCFAGALINDQEKDLSTTLQDGDTVLFLT) enclose the TGS domain. The catalytic stretch occupies residues 237–528 (DHRVLGTKLD…LIEHFKGRFP (292 aa)). Residues cysteine 328, histidine 379, and histidine 505 each contribute to the Zn(2+) site.

Belongs to the class-II aminoacyl-tRNA synthetase family. Homodimer. Requires Zn(2+) as cofactor.

It localises to the cytoplasm. The catalysed reaction is tRNA(Thr) + L-threonine + ATP = L-threonyl-tRNA(Thr) + AMP + diphosphate + H(+). Catalyzes the attachment of threonine to tRNA(Thr) in a two-step reaction: L-threonine is first activated by ATP to form Thr-AMP and then transferred to the acceptor end of tRNA(Thr). Also edits incorrectly charged L-seryl-tRNA(Thr). The sequence is that of Threonine--tRNA ligase from Chlamydia trachomatis serovar A (strain ATCC VR-571B / DSM 19440 / HAR-13).